The chain runs to 348 residues: METGNLPDNTLILDSLIHSVLVINQEFIICYANHAALQVLAQSRRKLFETPFTDLFSYHSFDAELMQETLANGQSFTDNEVILVIHNQSHTMSLSAQPISEQHILLELAPMDSQRRLSQEQIQQAQQIAARELVRGLAHEIKNPLGGLRGAAQLLAKSLPDPALTEYTQVIIEQADRLRTLVDRLLGPQHPGKKTHQSIHHVVERVAQLISLECPENVTLLKDYDPSLPELSHYPDQIEQVLLNITRNALQAVEKTGGTIILRTRTAFQITLHGERHRLVARIDVIDTGSGIPPHLQDTLFYPMVSGREDGNGLGLSIARNLVDQHAGKIEFTSWPGNTEFSIYLPIK.

A PAS domain is found at 5-78 (NLPDNTLILD…TLANGQSFTD (74 aa)). Positions 136 to 348 (GLAHEIKNPL…TEFSIYLPIK (213 aa)) constitute a Histidine kinase domain. His139 carries the phosphohistidine; by autocatalysis modification. Lys329 contacts ATP.

In terms of processing, autophosphorylated.

Its subcellular location is the cytoplasm. It carries out the reaction ATP + protein L-histidine = ADP + protein N-phospho-L-histidine.. Its function is as follows. Member of the two-component regulatory system NtrB/NtrC, which controls expression of the nitrogen-regulated (ntr) genes in response to nitrogen limitation. Under conditions of nitrogen limitation, NtrB autophosphorylates and transfers the phosphoryl group to NtrC. In the presence of nitrogen, acts as a phosphatase that dephosphorylates and inactivates NtrC. The chain is Sensory histidine kinase/phosphatase NtrB (ntrB) from Proteus hauseri.